Here is a 300-residue protein sequence, read N- to C-terminus: Cation-efflux pump FieF (300 aa).

Transmembrane regions (helical) follow at residues 12 to 32 (AAIA…FAWW), 39 to 59 (ILAA…NLLV), 82 to 102 (AALA…LTSI), and 114 to 134 (PGVG…LVTF). Zn(2+) contacts are provided by Asp45 and Asp49. His153 and Asp157 together coordinate Zn(2+). The next 2 helical transmembrane spans lie at 156–176 (SDVM…YGWH) and 178–198 (ADAL…LRMG).

Belongs to the cation diffusion facilitator (CDF) transporter (TC 2.A.4) family. FieF subfamily. Homodimer.

The protein localises to the cell inner membrane. It catalyses the reaction Zn(2+)(in) + H(+)(out) = Zn(2+)(out) + H(+)(in). The enzyme catalyses Cd(2+)(in) + H(+)(out) = Cd(2+)(out) + H(+)(in). The catalysed reaction is Fe(2+)(in) + H(+)(out) = Fe(2+)(out) + H(+)(in). Its function is as follows. Divalent metal cation transporter which exports Zn(2+), Cd(2+) and possibly Fe(2+). May be involved in zinc and iron detoxification by efflux. The protein is Cation-efflux pump FieF of Salmonella arizonae (strain ATCC BAA-731 / CDC346-86 / RSK2980).